Consider the following 92-residue polypeptide: Small ribosomal subunit protein uS19c (92 aa).

This sequence belongs to the universal ribosomal protein uS19 family.

The protein localises to the plastid. Its subcellular location is the chloroplast. Protein S19 forms a complex with S13 that binds strongly to the 16S ribosomal RNA. The chain is Small ribosomal subunit protein uS19c from Morus indica (Mulberry).